The sequence spans 213 residues: Anti-sigma-E factor ChrR (213 aa).

The tract at residues 2 to 85 is sufficient to bind sigma factor and inhibit its activity; the sequence is TIRHHVSDAL…QIQRPAPARR (84 aa). H6, H31, C35, C38, H141, H143, E147, and H177 together coordinate Zn(2+). Positions 86 to 194 are required for response to singlet oxygen; sequence ADPRAPAPLA…LDCICLAATD (109 aa).

Belongs to the zinc-associated anti-sigma factor (ZAS) superfamily. Forms a 1:1 complex with cognate ECF RNA polymerase sigma factor RpoE; this inhibits the interaction of RpoE with the RNA polymerase catalytic core. Requires Zn(2+) as cofactor.

Anti-sigma factor that inhibits the activity of the extracytoplasmic function (ECF) sigma-E factor (RpoE), thereby indirectly regulating the transcription of the cycA and rpoE genes. ECF sigma factors are held in an inactive form by a cognate anti-sigma factor. The sequence is that of Anti-sigma-E factor ChrR (chrR) from Cereibacter sphaeroides (strain ATCC 17023 / DSM 158 / JCM 6121 / CCUG 31486 / LMG 2827 / NBRC 12203 / NCIMB 8253 / ATH 2.4.1.) (Rhodobacter sphaeroides).